A 612-amino-acid polypeptide reads, in one-letter code: UvrABC system protein C (612 aa).

The 80-residue stretch at 11-90 folds into the GIY-YIG domain; sequence TASGVYLMKG…IKKYRPRYNI (80 aa). The UVR domain maps to 200-235; that stretch reads SEVVESLQHQMAAAAERMAFEEAARLRDQLRAIEQT.

It belongs to the UvrC family. As to quaternary structure, interacts with UvrB in an incision complex.

Its subcellular location is the cytoplasm. The UvrABC repair system catalyzes the recognition and processing of DNA lesions. UvrC both incises the 5' and 3' sides of the lesion. The N-terminal half is responsible for the 3' incision and the C-terminal half is responsible for the 5' incision. In Syntrophotalea carbinolica (strain DSM 2380 / NBRC 103641 / GraBd1) (Pelobacter carbinolicus), this protein is UvrABC system protein C.